We begin with the raw amino-acid sequence, 185 residues long: Bcl-2-like protein 10 (185 aa).

The short motif at 76 to 95 is the BH1 element; the sequence is LSNDQEFNWGRLVMLLAFVG. Positions 138–149 match the BH2 motif; that stretch reads WLEAHGGWDGFC. Residues 160–182 form a helical membrane-spanning segment; sequence FWRRLLIRAILSCFFATAIFYIW.

This sequence belongs to the Bcl-2 family. As to quaternary structure, interacts with BAX. Interacts with BCL2, BCL2L1/BCLX. Interacts with APAF1. Interacts with ITPR1, ITPR2 and ITPR3; the interaction with ITPR1 is increased in the presence of AHCLY1. Interacts with AHCYL1. Interacts with HIP1R (via ENTH and I/LWEQ domains). Interacts with CASP9. Interacts with BCL2L11/BIM. Interacts with BIK. Interacts with UBQLN4. Interacts with NME2/NM23-H2. Interacts with and PMAIP1/NOXA. Interacts with TPX2. Interacts with UBQLN1; in the cytoplasm. Interacts (via BH1 domain) with BECN1. Requires Ca(2+) as cofactor. In terms of processing, monoubiquitinated by UBQLN1; results in stabilization of BCL2L10 protein abundance and in relocalization from mitochondria to cytoplasm. As to expression, expressed in oligodendroglial lineage cells.

It localises to the mitochondrion. The protein resides in the nucleus membrane. The protein localises to the endoplasmic reticulum. It is found in the cytoplasm. Its subcellular location is the cytoskeleton. It localises to the spindle. Its function is as follows. Promotes cell survival by suppressing apoptosis induced by BAX but not BAK. Increases binding of AHCYL1/IRBIT to ITPR1. Reduces ITPR1-mediated calcium release from the endoplasmic reticulum cooperatively with AHCYL1/IRBIT under normal cellular conditions. Under apoptotic stress conditions, dissociates from ITPR1 and is displaced from mitochondria-associated endoplasmic reticulum membranes, leading to increased Ca(2+) transfer to mitochondria which promotes apoptosis. Required for the correct formation of the microtubule organizing center during oocyte cell division, potentially via regulation of protein abundance and localization of other microtubule organizing center components such as AURKA and TPX2. The sequence is that of Bcl-2-like protein 10 from Rattus norvegicus (Rat).